Here is a 469-residue protein sequence, read N- to C-terminus: Cysteine--tRNA ligase (469 aa).

Cysteine 28 contributes to the Zn(2+) binding site. The short motif at 30–40 is the 'HIGH' region element; that stretch reads PTVYNYIHIGN. Residues cysteine 213, histidine 238, and glutamate 242 each coordinate Zn(2+). A 'KMSKS' region motif is present at residues 270–274; the sequence is KMSKS. Lysine 273 contacts ATP.

It belongs to the class-I aminoacyl-tRNA synthetase family. As to quaternary structure, monomer. Zn(2+) is required as a cofactor.

The protein resides in the cytoplasm. The enzyme catalyses tRNA(Cys) + L-cysteine + ATP = L-cysteinyl-tRNA(Cys) + AMP + diphosphate. This Leuconostoc citreum (strain KM20) protein is Cysteine--tRNA ligase.